The sequence spans 485 residues: Glutamate--tRNA ligase (485 aa).

The 'HIGH' region motif lies at 12-22 (PSPTGYMHVGN). Zn(2+) contacts are provided by C109, C111, C136, and H138. The 'KMSKS' region signature appears at 253–257 (KLSKR). K256 contributes to the ATP binding site.

The protein belongs to the class-I aminoacyl-tRNA synthetase family. Glutamate--tRNA ligase type 1 subfamily. Monomer. Requires Zn(2+) as cofactor.

The protein resides in the cytoplasm. The catalysed reaction is tRNA(Glu) + L-glutamate + ATP = L-glutamyl-tRNA(Glu) + AMP + diphosphate. Functionally, catalyzes the attachment of glutamate to tRNA(Glu) in a two-step reaction: glutamate is first activated by ATP to form Glu-AMP and then transferred to the acceptor end of tRNA(Glu). This is Glutamate--tRNA ligase from Clostridium botulinum (strain Eklund 17B / Type B).